The following is a 290-amino-acid chain: ADP-ribosylation factor-like protein 13A (290 aa).

GTP-binding positions include 28–35, 71–75, and 130–133; these read GLNNSGKT, DLNGD, and NKQD. The disordered stretch occupies residues 204 to 226; that stretch reads SKNNTGSGERCSSHSFSTRTGMS.

Belongs to the small GTPase superfamily. Arf family.

In Homo sapiens (Human), this protein is ADP-ribosylation factor-like protein 13A (ARL13A).